The primary structure comprises 143 residues: Small ribosomal subunit protein bS6 (143 aa).

The interval 95 to 143 is disordered; sequence GPDTEQSFIMKSKDDKGDKPERRRRDDDENGDVGVSNDSDNDGGNAEAA. Positions 105-121 are enriched in basic and acidic residues; the sequence is KSKDDKGDKPERRRRDD.

This sequence belongs to the bacterial ribosomal protein bS6 family.

Binds together with bS18 to 16S ribosomal RNA. The protein is Small ribosomal subunit protein bS6 of Xylella fastidiosa (strain M23).